The chain runs to 146 residues: Ribosomal RNA large subunit methyltransferase H (146 aa).

S-adenosyl-L-methionine contacts are provided by residues Leu-60, Gly-93, and 112–117; that span reads MGKMTL.

Belongs to the RNA methyltransferase RlmH family. Homodimer.

It is found in the cytoplasm. It carries out the reaction pseudouridine(1915) in 23S rRNA + S-adenosyl-L-methionine = N(3)-methylpseudouridine(1915) in 23S rRNA + S-adenosyl-L-homocysteine + H(+). Specifically methylates the pseudouridine at position 1915 (m3Psi1915) in 23S rRNA. The polypeptide is Ribosomal RNA large subunit methyltransferase H (Koribacter versatilis (strain Ellin345)).